We begin with the raw amino-acid sequence, 584 residues long: Aspartate--tRNA(Asp/Asn) ligase (584 aa).

Residue Glu174 participates in L-aspartate binding. Residues 198-201 (QLFK) form an aspartate region. Arg220 is a binding site for L-aspartate. ATP is bound by residues 220–222 (RDE) and Gln229. Residue His447 coordinates L-aspartate. Glu480 serves as a coordination point for ATP. L-aspartate is bound at residue Arg487. Residue 532–535 (GFDR) coordinates ATP.

It belongs to the class-II aminoacyl-tRNA synthetase family. Type 1 subfamily. In terms of assembly, homodimer.

It localises to the cytoplasm. It carries out the reaction tRNA(Asx) + L-aspartate + ATP = L-aspartyl-tRNA(Asx) + AMP + diphosphate. Its function is as follows. Aspartyl-tRNA synthetase with relaxed tRNA specificity since it is able to aspartylate not only its cognate tRNA(Asp) but also tRNA(Asn). Reaction proceeds in two steps: L-aspartate is first activated by ATP to form Asp-AMP and then transferred to the acceptor end of tRNA(Asp/Asn). In Endomicrobium trichonymphae, this protein is Aspartate--tRNA(Asp/Asn) ligase.